We begin with the raw amino-acid sequence, 279 residues long: Shikimate dehydrogenase (NADP(+)) (279 aa).

Residues 19–21 (SRS) and T66 each bind shikimate. K70 (proton acceptor) is an active-site residue. N91 and D106 together coordinate shikimate. Residues 129–133 (GAGGA), 152–157 (NRTLER), and I218 contribute to the NADP(+) site. Shikimate is bound at residue Y220. G241 contacts NADP(+).

The protein belongs to the shikimate dehydrogenase family. As to quaternary structure, homodimer.

It carries out the reaction shikimate + NADP(+) = 3-dehydroshikimate + NADPH + H(+). It functions in the pathway metabolic intermediate biosynthesis; chorismate biosynthesis; chorismate from D-erythrose 4-phosphate and phosphoenolpyruvate: step 4/7. In terms of biological role, involved in the biosynthesis of the chorismate, which leads to the biosynthesis of aromatic amino acids. Catalyzes the reversible NADPH linked reduction of 3-dehydroshikimate (DHSA) to yield shikimate (SA). This is Shikimate dehydrogenase (NADP(+)) from Gluconobacter oxydans (strain 621H) (Gluconobacter suboxydans).